Reading from the N-terminus, the 496-residue chain is NADH-quinone oxidoreductase subunit N (496 aa).

Helical transmembrane passes span 8 to 28, 37 to 57, 73 to 93, 110 to 130, 131 to 151, 162 to 182, 203 to 223, 235 to 255, 271 to 291, 300 to 320, 341 to 361, 386 to 406, 421 to 441, and 464 to 484; these read LLST…VGLI, MFPL…YDFF, QFAG…VLST, LLLL…LLTM, YVGL…HPND, LVLG…IYGL, TILA…LVPF, PAPI…AALV, GLIL…LMAF, MAYS…AVSI, GVLF…AVIT, AAVL…AGFV, VWIA…YLSI, and FGMI…TPLA.

Belongs to the complex I subunit 2 family. In terms of assembly, NDH-1 is composed of 14 different subunits. Subunits NuoA, H, J, K, L, M, N constitute the membrane sector of the complex.

Its subcellular location is the cell membrane. The catalysed reaction is a quinone + NADH + 5 H(+)(in) = a quinol + NAD(+) + 4 H(+)(out). NDH-1 shuttles electrons from NADH, via FMN and iron-sulfur (Fe-S) centers, to quinones in the respiratory chain. The immediate electron acceptor for the enzyme in this species is believed to be a menaquinone. Couples the redox reaction to proton translocation (for every two electrons transferred, four hydrogen ions are translocated across the cytoplasmic membrane), and thus conserves the redox energy in a proton gradient. The chain is NADH-quinone oxidoreductase subunit N from Desulfitobacterium hafniense (strain DSM 10664 / DCB-2).